The chain runs to 795 residues: MWRISRVELENFRSYRGAHRLELGDVNLLWGRIGAGKTSVFYAIEYALFGQQLEVKERVAKLADLIHSGSHEARVALELVDGANVLKVERKLGKRGAEKLVVVHNGVELRGGEAERRLEELLGVDEDLYERLVYISHRTLEGFIYGTSQKRAISVDRLFGIDVIDGVVKTVSSAEKALLGKAEELRKRLAAYEKYRDVIKRYGGYSGLVSRLRALSSEIEALKEREAMLTRTVEELARARAAYLAKLKEHEQILLEYYRARSELEFLESSAGGEVDVGALEKVKAALREAAEEFEHMLDPGILEKLYKASDLEALSVAMAEVYDALTRVAKDLELELTDVKKAYEEYVARARRLEEEVAAAEARLRRLEKPFLRFQELLKKLRSLEEARARLSEARRRLSEAEREAAYYTSLKTVALYLAETNASVCPICGSPISREAVEKVVRDIDEKFGGVVKRVEELREEVKALEREVEEMEILQGDAAEYIAAKARLDELKVEREEVVKKVLQAEKSVRQLEKRIEKLREFFAKVDKRVISDAVSRYGRAVRIRELRKRVKELEERLRQAGIGGEELEVEVKWREAAAELEKAAARLAELYKEKSLLEEAAREVGEEAEGLKKRLDNVLYAYGRLEELKSRLELAKVSARARLVEVVRSRFNEVFQSLYKYGDVVKVDAAVEPSRGYYDFYAISPSGDRYGVSRLSDGQRLSIALSLALALREISQVKLGFLIFDEPIPYVDVNVRKAFAQLLTSLAGRYQLLVATQSREFAEEVREALPNAKLFTVVKDGASALIEGLQS.

Coiled coils occupy residues 205–253, 323–412, and 450–618; these read YSGL…HEQI, YDAL…YTSL, and FGGV…LKKR.

It is found in the cytoplasm. The protein resides in the cytoskeleton. Part of an actin-like archaeal cytoskeleton. This Pyrobaculum calidifontis (strain DSM 21063 / JCM 11548 / VA1) protein is Arcadin-4.